The sequence spans 290 residues: 4-hydroxybenzoate octaprenyltransferase (290 aa).

The next 8 helical transmembrane spans lie at 40 to 60 (IAGA…GVVI), 99 to 119 (LALF…LNEL), 120 to 140 (TFWL…TKRF), 142 to 162 (FMPQ…AFAA), 165 to 185 (GEVP…TVAY), 215 to 235 (LMIA…GHRL), 239 to 259 (WPWY…HSLI), and 267 to 287 (SFHA…GLYF).

Belongs to the UbiA prenyltransferase family. Requires Mg(2+) as cofactor.

It localises to the cell inner membrane. The enzyme catalyses all-trans-octaprenyl diphosphate + 4-hydroxybenzoate = 4-hydroxy-3-(all-trans-octaprenyl)benzoate + diphosphate. It participates in cofactor biosynthesis; ubiquinone biosynthesis. Functionally, catalyzes the prenylation of para-hydroxybenzoate (PHB) with an all-trans polyprenyl group. Mediates the second step in the final reaction sequence of ubiquinone-8 (UQ-8) biosynthesis, which is the condensation of the polyisoprenoid side chain with PHB, generating the first membrane-bound Q intermediate 3-octaprenyl-4-hydroxybenzoate. This is 4-hydroxybenzoate octaprenyltransferase from Alcanivorax borkumensis (strain ATCC 700651 / DSM 11573 / NCIMB 13689 / SK2).